A 406-amino-acid polypeptide reads, in one-letter code: Argininosuccinate synthase (406 aa).

8–16 (AYSGGLDTS) is an ATP binding site. L-citrulline is bound at residue Y86. G116 lines the ATP pocket. Residues T118, N122, and D123 each contribute to the L-aspartate site. L-citrulline is bound at residue N122. Residues R126, S174, E259, and Y271 each contribute to the L-citrulline site.

Belongs to the argininosuccinate synthase family. Type 1 subfamily. Homotetramer.

It is found in the cytoplasm. The enzyme catalyses L-citrulline + L-aspartate + ATP = 2-(N(omega)-L-arginino)succinate + AMP + diphosphate + H(+). It functions in the pathway amino-acid biosynthesis; L-arginine biosynthesis; L-arginine from L-ornithine and carbamoyl phosphate: step 2/3. The sequence is that of Argininosuccinate synthase from Lacticaseibacillus paracasei (strain ATCC 334 / BCRC 17002 / CCUG 31169 / CIP 107868 / KCTC 3260 / NRRL B-441) (Lactobacillus paracasei).